The sequence spans 155 residues: MSKVLEQVEAIVAPITDELQLELVDIVFEKEGPNWFLRIFIDKDGGVDIDECAAVSEKVSEKMDENDPITQNYFLEVSSPGAERPLKKEQDFENAVSKYVHVTSYEPIDGRKMWEGTLVSYDGTTLVITITDKTRKITCEIPKDKVAKARLAIQF.

This sequence belongs to the RimP family.

It is found in the cytoplasm. In terms of biological role, required for maturation of 30S ribosomal subunits. The protein is Ribosome maturation factor RimP of Listeria monocytogenes serotype 4a (strain HCC23).